The primary structure comprises 234 residues: UPF0758 protein Smlt0399 (234 aa).

The MPN domain maps to 103–225; that stretch reads VGNNPAAVGR…PVSFAERGLL (123 aa). Zn(2+)-binding residues include His174, His176, and Asp187. The JAMM motif signature appears at 174-187; it reads HNHPSGDPEPSSAD.

Belongs to the UPF0758 family.

This is UPF0758 protein Smlt0399 from Stenotrophomonas maltophilia (strain K279a).